We begin with the raw amino-acid sequence, 436 residues long: MMKRFVALSMAIFSLSFAQDVDEKIKALEEQIESLQKELQELKKAKEETEVLKEEFRKLRLEIVMPEAYKPYAGLGPAASKVYQVKKGVSIGGYGELHYINNPDNDPSSIIDLKRLILYFGYSFTENLKFNSEIEIEHAFVEGGEESGELAVEFAYLDYNFSPKFGLRGGMLLIPVGIVNELHEPPTFPTVDRPYLERNIIPTTWSENGIGIYGDTDLISYRAYIVNGMKAEEGEFKASAPLKKLRQNGGEAVSDSLAFTGRIDFKLPNNLTVGASTFISGVQNEDGKNLGNIYLFSPHLWWQYAGWDVRFVGAYATVSDAEKITLELSSATCDKSTCNVFPKRMQGFYLQVAYNILRHFDTEQELYVFGVYENYDTHASVPSGYEKPKGSEVQIFNFGISYKPHPLVALKADYVREDYKDKKDNDIYRAAITWMF.

Residues 1–18 (MMKRFVALSMAIFSLSFA) form the signal peptide.

This is an uncharacterized protein from Aquifex aeolicus (strain VF5).